Consider the following 608-residue polypeptide: Glutamyl-tRNA(Gln) amidotransferase subunit E (608 aa).

It belongs to the GatB/GatE family. GatE subfamily. As to quaternary structure, heterodimer of GatD and GatE.

The enzyme catalyses L-glutamyl-tRNA(Gln) + L-glutamine + ATP + H2O = L-glutaminyl-tRNA(Gln) + L-glutamate + ADP + phosphate + H(+). Its function is as follows. Allows the formation of correctly charged Gln-tRNA(Gln) through the transamidation of misacylated Glu-tRNA(Gln) in organisms which lack glutaminyl-tRNA synthetase. The reaction takes place in the presence of glutamine and ATP through an activated gamma-phospho-Glu-tRNA(Gln). The GatDE system is specific for glutamate and does not act on aspartate. In Pyrobaculum aerophilum (strain ATCC 51768 / DSM 7523 / JCM 9630 / CIP 104966 / NBRC 100827 / IM2), this protein is Glutamyl-tRNA(Gln) amidotransferase subunit E.